A 485-amino-acid polypeptide reads, in one-letter code: ATP synthase subunit beta (485 aa).

Positions methionine 1–glycine 20 are disordered. Glycine 170–threonine 177 provides a ligand contact to ATP.

The protein belongs to the ATPase alpha/beta chains family. In terms of assembly, F-type ATPases have 2 components, CF(1) - the catalytic core - and CF(0) - the membrane proton channel. CF(1) has five subunits: alpha(3), beta(3), gamma(1), delta(1), epsilon(1). CF(0) has three main subunits: a(1), b(2) and c(9-12). The alpha and beta chains form an alternating ring which encloses part of the gamma chain. CF(1) is attached to CF(0) by a central stalk formed by the gamma and epsilon chains, while a peripheral stalk is formed by the delta and b chains.

The protein resides in the cell membrane. The catalysed reaction is ATP + H2O + 4 H(+)(in) = ADP + phosphate + 5 H(+)(out). Produces ATP from ADP in the presence of a proton gradient across the membrane. The catalytic sites are hosted primarily by the beta subunits. This is ATP synthase subunit beta from Mycobacterium leprae (strain TN).